We begin with the raw amino-acid sequence, 413 residues long: Divalent metal cation transporter MntH (413 aa).

11 consecutive transmembrane segments (helical) span residues 19–39 (LALMGPAFVAAIGYIDPGNFA), 46–66 (ASFGYQLLWVVVWANLMAMLI), 94–114 (VWFYWVQAEIIAMATDLAEFI), 122–142 (LVLGVSLLQGAVLTGVATFLI), 156–176 (VIGGLLLFVAVAYVVELIFSQ), 196–216 (AVFLAAGVLGATIMPHVIYLH), 241–261 (IAMTIAGFVNLAMMATAAAAF), 290–310 (IFGLSLIAAGLSSTVVGTLAG), 329–349 (AITMLPSFVVILLGLDPTRIL), 350–370 (VMSQVLLSFGIALALVPLLIF), and 389–409 (IGWAIVAIVVSLNGWLIVGSL).

Belongs to the NRAMP family.

The protein resides in the cell inner membrane. Its function is as follows. H(+)-stimulated, divalent metal cation uptake system. This Klebsiella pneumoniae subsp. pneumoniae (strain ATCC 700721 / MGH 78578) protein is Divalent metal cation transporter MntH.